We begin with the raw amino-acid sequence, 256 residues long: Alcohol dehydrogenase (256 aa).

Position 12–35 (12–35 (FVAGLGGIGLDTSREIVKAGPKNL)) interacts with NAD(+). S140 lines the substrate pocket. Y153 (proton acceptor) is an active-site residue.

Belongs to the short-chain dehydrogenases/reductases (SDR) family. In terms of assembly, homodimer.

The enzyme catalyses a primary alcohol + NAD(+) = an aldehyde + NADH + H(+). It carries out the reaction a secondary alcohol + NAD(+) = a ketone + NADH + H(+). The polypeptide is Alcohol dehydrogenase (Adh) (Zaprionus tuberculatus (Vinegar fly)).